The primary structure comprises 760 residues: Forkhead box protein M1 (760 aa).

2 disordered regions span residues 1–54 (MRTS…AESS) and 95–167 (GKES…SYAG). Composition is skewed to low complexity over residues 43–54 (PAQASQEVAESS) and 110–124 (SSGGPSSHPSQPQAH). The segment covering 125 to 134 (SSRDSKRAEV) has biased composition (basic and acidic residues). The segment covering 140–149 (GPKPAAKGVP) has biased composition (low complexity). Residues Lys199 and Lys323 each participate in a glycyl lysine isopeptide (Lys-Gly) (interchain with G-Cter in SUMO2) cross-link. Residues 233-325 (ERPPYSYMAM…LTLDQVFKPL (93 aa)) constitute a DNA-binding region (fork-head). The segment at 323–348 (KPLEPGSPQSPEHLESQQKRPNPELH) is disordered. Ser329 carries the phosphoserine modification. A compositionally biased stretch (basic and acidic residues) spans 334–348 (EHLESQQKRPNPELH). Residue Lys354 forms a Glycyl lysine isopeptide (Lys-Gly) (interchain with G-Cter in SUMO2) linkage. Ser374 carries the post-translational modification Phosphoserine; by CHEK2. Glycyl lysine isopeptide (Lys-Gly) (interchain with G-Cter in SUMO2) cross-links involve residues Lys420 and Lys438. 3 disordered regions span residues 500 to 560 (SWED…PDLF), 577 to 635 (ESSE…LDFS), and 660 to 709 (PLKS…IPSL). Phosphoserine is present on Ser521. A compositionally biased stretch (basic and acidic residues) spans 531 to 542 (VTKRREKREVSR). Over residues 604–613 (PVSSTPSKSV) the composition is skewed to polar residues. Thr608 is subject to Phosphothreonine; by CDK1. Thr624 carries the phosphothreonine modification. Ser727 and Ser736 each carry phosphoserine; by PLK1.

Phosphorylated in M (mitotic) phase. Phosphorylation by the checkpoint kinase CHEK2 in response to DNA damage increases the FOXM1 protein stability probably stimulating the transcription of genes involved in DNA repair. Phosphorylated by CDK1 in late S and G2 phases, creating docking sites for the POLO box domains of PLK1. Subsequently, PLK1 binds and phosphorylates FOXM1, leading to activation of transcriptional activity and subsequent enhanced expression of key mitotic regulators. Phosphorylated by GSK3B leading to ubiquitination and proteasomal degradation. In terms of tissue distribution, expressed in fetal heart, brain, liver, lung, kidney and limb, but only in adult thymus. Appears to be expressed only in adult organs containing proliferating/cycling cells or in response to growth factors.

It is found in the nucleus. Functionally, transcription factor regulating the expression of cell cycle genes essential for DNA replication and mitosis. Plays a role in the control of cell proliferation. Also plays a role in DNA break repair, participating in the DNA damage checkpoint response. Promotes transcription of PHB2. In Mus musculus (Mouse), this protein is Forkhead box protein M1 (Foxm1).